A 228-amino-acid chain; its full sequence is uncharacterized protein (228 aa).

The region spanning 11-78 (PPVNQQIYRI…PQRGSYVNKI (68 aa)) is the HTH gntR-type domain. Positions 38–57 (EKEVSVRFNVSRQPVREAFI) form a DNA-binding region, H-T-H motif.

This is an uncharacterized protein from Escherichia coli O6:H1 (strain CFT073 / ATCC 700928 / UPEC).